Consider the following 652-residue polypeptide: WD repeat-containing protein 70 (652 aa).

Disordered stretches follow at residues 1–22 and 45–171; these read MERPGPSDGSDASGPDPQLAVT and RRTA…IPDS. The segment covering 45–76 has biased composition (basic and acidic residues); that stretch reads RRTAVERSRKTLEAREREEEMNREKELRRQNE. Residues 92–102 show a composition bias toward low complexity; that stretch reads SKSSSRDTSSS. Acidic residues-rich tracts occupy residues 103 to 115 and 146 to 162; these read ESDESSDSSDDEL and EDVEEEDDDDGDSEEEE. WD repeat units follow at residues 178–217, 225–266, 279–319, 328–367, 374–413, 419–464, and 467–506; these read HGTKTVSALGLDPSGARLVTGGYDYDVKFWDFAGMDASFK, CECH…ECIK, GHTA…KQKS, GKKVIPTTCTYSRDGSLIAAACQNGSIQIWDRNLTVHPKF, DPGTDTSCVTFSYDGTVLASRGGDDTLKLWDIRQFNKPLF, PTMF…RVYE, and ITDASVVRCLWHPKLNQIMVGTGNGLAKVYYDPNKSQRGA. A Glycyl lysine isopeptide (Lys-Gly) (interchain with G-Cter in SUMO2) cross-link involves residue Lys-294. N6-acetyllysine is present on Lys-450. Positions 538–563 are enriched in basic and acidic residues; sequence REPRQRSTRKQLEKDRLDPLKSHKPE. Residues 538 to 577 form a disordered region; sequence REPRQRSTRKQLEKDRLDPLKSHKPEPPVAGPGRGGRVGT. Phosphothreonine is present on Thr-577. Glycyl lysine isopeptide (Lys-Gly) (interchain with G-Cter in SUMO2) cross-links involve residues Lys-588 and Lys-594. Phosphoserine is present on residues Ser-619 and Ser-636. The disordered stretch occupies residues 629–652; sequence TMFAQVESDDEETKNEPEWKKRKI. Over residues 642-652 the composition is skewed to basic and acidic residues; it reads KNEPEWKKRKI.

Belongs to the WD repeat GAD-1 family.

The chain is WD repeat-containing protein 70 (WDR70) from Bos taurus (Bovine).